The sequence spans 82 residues: Diphthamide biosynthesis protein 3 (82 aa).

The DPH-type MB domain maps to 3-59; that stretch reads TYDEIEIEDMTFEPENQMFTYPCPCGDRFQIYLDDMFEGEKVAVCPSCSLMIDVVFD. Residues cysteine 25, cysteine 27, cysteine 47, and cysteine 50 each contribute to the Fe cation site. Positions 66-82 are required for interaction with the elongator complex; the sequence is YYEEAGIHPPEPIAAAA.

The protein belongs to the DPH3 family. As to quaternary structure, component of the 2-(3-amino-3-carboxypropyl)histidine synthase complex composed of DPH1, DPH2, KTI11/DPH3 and a NADH-dependent reductase, predominantly CBR1. Interacts with DPH1. Interacts with DPH2. Interacts with CBR1. Interacts with elongation factor 2. Interacts with ATS1/KTI13; the interaction is direct. Interacts with the 40S ribosomal protein RPS7A. Interacts with the 40S ribosomal protein RPS19A. Interacts with the elongator complex subunit IKI3/ELP1. Interacts with the elongator complex subunit ELP2. Interacts with the elongator complex subunit ELP3. Interacts with the elongator complex subunit ELP5.

The protein resides in the cytoplasm. It is found in the nucleus. It carries out the reaction [3Fe-4S](1+)-[protein] + Fe(2+)-[Dph3] = [3Fe-4S](0)-[protein] + Fe(3+)-[Dph3]. The catalysed reaction is 2 [3Fe-4S](0)-[protein] + 2 Fe(2+)-[Dph3] + NADH = 2 [4Fe-4S](1+)-[protein] + 2 [Dph3] + NAD(+) + H(+). Its pathway is protein modification; peptidyl-diphthamide biosynthesis. Functionally, required for the first step of diphthamide biosynthesis, a post-translational modification of histidine which occurs in elongation factor 2. DPH1 and DPH2 transfer a 3-amino-3-carboxypropyl (ACP) group from S-adenosyl-L-methionine (SAM) to a histidine residue, the reaction is assisted by a reduction system comprising KTI11/DPH3 and a NADH-dependent reductase, predominantly CBR1. Acts as an electron donor to reduce the Fe-S cluster in DPH1-DPH2 keeping the [4Fe-4S] clusters in the active and reduced state. Restores iron to DPH1-DPH2 iron-sulfur clusters which have degraded from [4Fe-4S] to [3Fe-4S] by donating an iron atom to reform [4Fe-4S] clusters, in a manner dependent on the presence of elongation factor 2 and SAM. Together with ATS1; associates with the elongator complex and is required for tRNA Wobble base modifications mediated by the elongator complex. The elongator complex is required for multiple tRNA modifications, including mcm5U (5-methoxycarbonylmethyl uridine), mcm5s 2U (5-methoxycarbonylmethyl-2-thiouridine), and ncm5U (5-carbamoylmethyl uridine). The chain is Diphthamide biosynthesis protein 3 from Saccharomyces cerevisiae (strain ATCC 204508 / S288c) (Baker's yeast).